Consider the following 149-residue polypeptide: FKBP-type 16 kDa peptidyl-prolyl cis-trans isomerase (149 aa).

The PPIase FKBP-type domain maps to 2 to 72 (SESVQSNSAV…FSLEPDAAFG (71 aa)).

This sequence belongs to the FKBP-type PPIase family.

The enzyme catalyses [protein]-peptidylproline (omega=180) = [protein]-peptidylproline (omega=0). Its function is as follows. PPIases accelerate the folding of proteins. Substrate specificity carried out with 'Suc-Ala-Xaa-Pro-Phe-4-nitroanilide', where Xaa is the amino acid tested, was found to be Phe &gt; Leu &gt;&gt; Ile &gt; Lys = Ala &gt; Trp &gt; His &gt;&gt; Gln. The polypeptide is FKBP-type 16 kDa peptidyl-prolyl cis-trans isomerase (fkpB) (Escherichia coli O6:H1 (strain CFT073 / ATCC 700928 / UPEC)).